The following is a 320-amino-acid chain: Biotin synthase (320 aa).

In terms of domain architecture, Radical SAM core spans 39-267; the sequence is NAIQLATLLS…KARVRLSAGR (229 aa). 3 residues coordinate [4Fe-4S] cluster: C54, C58, and C61. C98, C130, C190, and R262 together coordinate [2Fe-2S] cluster.

The protein belongs to the radical SAM superfamily. Biotin synthase family. As to quaternary structure, homodimer. Requires [4Fe-4S] cluster as cofactor. The cofactor is [2Fe-2S] cluster.

The catalysed reaction is (4R,5S)-dethiobiotin + (sulfur carrier)-SH + 2 reduced [2Fe-2S]-[ferredoxin] + 2 S-adenosyl-L-methionine = (sulfur carrier)-H + biotin + 2 5'-deoxyadenosine + 2 L-methionine + 2 oxidized [2Fe-2S]-[ferredoxin]. Its pathway is cofactor biosynthesis; biotin biosynthesis; biotin from 7,8-diaminononanoate: step 2/2. Its function is as follows. Catalyzes the conversion of dethiobiotin (DTB) to biotin by the insertion of a sulfur atom into dethiobiotin via a radical-based mechanism. The sequence is that of Biotin synthase from Synechococcus elongatus (strain ATCC 33912 / PCC 7942 / FACHB-805) (Anacystis nidulans R2).